A 516-amino-acid polypeptide reads, in one-letter code: Alstonine synthase (516 aa).

The helical transmembrane segment at 6 to 26 (NFSLTSPIFLLLSSLFLIILL) threads the bilayer. Cys453 is a heme binding site.

The protein belongs to the cytochrome P450 family. Heme serves as cofactor. As to expression, highly expressed in stems. Expressed at low levels in roots.

The protein localises to the endoplasmic reticulum membrane. The enzyme catalyses tetrahydroalstonine + A + reduced [NADPH--hemoprotein reductase] + O2 = alstonine + AH2 + oxidized [NADPH--hemoprotein reductase] + 2 H2O + H(+). It catalyses the reaction ajmalicine + A + reduced [NADPH--hemoprotein reductase] + O2 = serpentine + AH2 + oxidized [NADPH--hemoprotein reductase] + 2 H2O + H(+). It participates in alkaloid biosynthesis. Functionally, involved in monoterpene indole alkaloids (MIAs) biosynthesis. Converts by aromatization the tetrahydro-beta-carboline alkaloids tetrahydroalstonine and ajmalicine to the corresponding beta-carboline alkaloids alstonine and serpentine, respectively. The polypeptide is Alstonine synthase (Catharanthus roseus (Madagascar periwinkle)).